The chain runs to 138 residues: Small ribosomal subunit protein uS11c (138 aa).

The segment at 1 to 21 (MAKSISKIGSRKNARIGSRKQ) is disordered. Basic residues predominate over residues 9 to 21 (GSRKNARIGSRKQ).

It belongs to the universal ribosomal protein uS11 family. In terms of assembly, part of the 30S ribosomal subunit.

The protein resides in the plastid. It is found in the chloroplast. The protein is Small ribosomal subunit protein uS11c of Cicer arietinum (Chickpea).